The chain runs to 509 residues: MWELVCLLLLILAYLFWPKPKTSDAKFPRSLPFLPLVGSLPFLPRHGHMHVNFFKLQEKYGPIYSLRLGTIPTVIIGQYQLAREVLIKKGKEFSGRPQMVTLGLLSNQGKGIAFADSDDAWQLHRKLALSSFALFRDGDQRLETIICQEASSLCDLLLTHNEESVDLSQPIFMSVTNIICAICFSTSYENRDPILTTIQTFTEGILNCLDNENLVDIFPWLTIFPNKTLEKIKRHVKVRDEVLIDMLEKCKEKFNNDSISNLTDILIQAKMNADNNNTTDHQGSFSDSHILSTVGDFFGAGIETTTSVLCWIVAFLLHNPEVKKKIQKEIDQNIGFSRTPTFNDRNHLLMLEATIREVLRIRPVAPMLIPHKANIDSSIGEFTIPKDTHVVINLWALHHNEKEWDQPDRFMPERFLDATGSHLITPSLSYLPFGAGPRACIGEVLARQVLFLYVACLLQRFDLDVPDGAPMPCLKGDPKVVFLIDPFKVKVTVRQAWKDAQAEVGTWRP.

Cysteine 440 is a binding site for heme.

It belongs to the cytochrome P450 family. The cofactor is heme.

It localises to the endoplasmic reticulum membrane. Its subcellular location is the microsome membrane. It carries out the reaction a C21-steroid + reduced [NADPH--hemoprotein reductase] + O2 = a 17alpha-hydroxy-C21-steroid + oxidized [NADPH--hemoprotein reductase] + H2O + H(+). The catalysed reaction is progesterone + reduced [NADPH--hemoprotein reductase] + O2 = 17alpha-hydroxyprogesterone + oxidized [NADPH--hemoprotein reductase] + H2O + H(+). It catalyses the reaction pregnenolone + reduced [NADPH--hemoprotein reductase] + O2 = 17alpha-hydroxypregnenolone + oxidized [NADPH--hemoprotein reductase] + H2O + H(+). The enzyme catalyses 17alpha-hydroxyprogesterone + reduced [NADPH--hemoprotein reductase] + O2 = androst-4-ene-3,17-dione + acetate + oxidized [NADPH--hemoprotein reductase] + H2O + 2 H(+). It carries out the reaction 17alpha-hydroxyprogesterone + reduced [NADPH--hemoprotein reductase] + O2 = 16alpha,17alpha-dihydroxyprogesterone + oxidized [NADPH--hemoprotein reductase] + H2O + H(+). The catalysed reaction is 16alpha,17alpha-dihydroxyprogesterone + reduced [NADPH--hemoprotein reductase] + O2 = 6beta,16alpha,17alpha-trihydroxyprogesterone + oxidized [NADPH--hemoprotein reductase] + H2O + H(+). It catalyses the reaction 17alpha-hydroxypregnenolone + reduced [NADPH--hemoprotein reductase] + O2 = 3beta-hydroxyandrost-5-en-17-one + acetate + oxidized [NADPH--hemoprotein reductase] + H2O + 2 H(+). The enzyme catalyses 16alpha,17alpha-dihydroxypregnenolone + reduced [NADPH--hemoprotein reductase] + O2 = 3beta,16alpha-dihydroxy-androst-5-en-17-one + acetate + oxidized [NADPH--hemoprotein reductase] + H2O + 2 H(+). It carries out the reaction 3beta-hydroxyandrost-5-en-17-one + reduced [NADPH--hemoprotein reductase] + O2 = 3beta,16alpha-dihydroxy-androst-5-en-17-one + oxidized [NADPH--hemoprotein reductase] + H2O + H(+). The catalysed reaction is androst-4-ene-3,17-dione + reduced [NADPH--hemoprotein reductase] + O2 = 16alpha-hydroxyandrost-4-ene-3,17-dione + oxidized [NADPH--hemoprotein reductase] + H2O + H(+). The protein operates within steroid hormone biosynthesis. It participates in steroid biosynthesis; glucocorticoid biosynthesis. Regulated predominantly by intracellular cAMP levels. The 17,20-lyase activity is stimulated by cytochrome b5, which acts as an allosteric effector increasing the Vmax of the lyase activity. Its function is as follows. A cytochrome P450 monooxygenase involved in corticoid and androgen biosynthesis. Catalyzes 17-alpha hydroxylation of C21 steroids, which is common for both pathways. A second oxidative step, required only for androgen synthesis, involves an acyl-carbon cleavage. The 17-alpha hydroxy intermediates, as part of adrenal glucocorticoids biosynthesis pathway, are precursors of cortisol. Hydroxylates steroid hormones, pregnenolone and progesterone to form 17-alpha hydroxy metabolites, followed by the cleavage of the C17-C20 bond to form C19 steroids, dehydroepiandrosterone (DHEA) and androstenedione. Has 16-alpha hydroxylase activity. Catalyzes 16-alpha hydroxylation of 17-alpha hydroxy pregnenolone, followed by the cleavage of the C17-C20 bond to form 16-alpha-hydroxy DHEA. Also 16-alpha hydroxylates androgens, relevant for estriol synthesis. Mechanistically, uses molecular oxygen inserting one oxygen atom into a substrate, and reducing the second into a water molecule, with two electrons provided by NADPH via cytochrome P450 reductase (CPR; NADPH-ferrihemoprotein reductase). The polypeptide is Steroid 17-alpha-hydroxylase/17,20 lyase (Cyp17a1) (Peromyscus leucopus (White-footed mouse)).